Consider the following 214-residue polypeptide: ER lumen protein-retaining receptor 3 (214 aa).

Topologically, residues Met-1–Phe-4 are lumenal. The helical transmembrane segment at Arg-5–Trp-24 threads the bilayer. Residues Lys-25–Ile-32 are Cytoplasmic-facing. A helical transmembrane segment spans residues Ser-33–Phe-52. An interaction with the K-D-E-L motif on target proteins region spans residues Arg-47–Tyr-48. The Lumenal segment spans residues Thr-53–Ala-58. A helical transmembrane segment spans residues Tyr-59–Tyr-79. Topologically, residues Gly-80–Thr-92 are cytoplasmic. The helical transmembrane segment at Phe-93–Asn-110 threads the bilayer. Topologically, residues Tyr-111–Leu-116 are lumenal. Residues Glu-117–Leu-135 traverse the membrane as a helical segment. Residues Phe-136 to Thr-149 lie on the Cytoplasmic side of the membrane. The helical transmembrane segment at His-150–Trp-168 threads the bilayer. The interaction with the K-D-E-L motif on target proteins stretch occupies residues Arg-159–Arg-169. Residues Arg-169–Gln-178 lie on the Lumenal side of the membrane. Residues Ile-179–Ile-199 form a helical membrane-spanning segment. The Cytoplasmic portion of the chain corresponds to Thr-200 to Val-214. The segment at Lys-204 to Lys-207 is important for recycling of cargo proteins with the sequence motif K-D-E-L from the Golgi to the endoplasmic reticulum.

This sequence belongs to the ERD2 family.

The protein localises to the endoplasmic reticulum membrane. The protein resides in the golgi apparatus membrane. It is found in the cytoplasmic vesicle. Its subcellular location is the COPI-coated vesicle membrane. Receptor for the C-terminal sequence motif K-D-E-L that is present on endoplasmic reticulum resident proteins and that mediates their recycling from the Golgi back to the endoplasmic reticulum. This is ER lumen protein-retaining receptor 3 (kdelr3) from Xenopus tropicalis (Western clawed frog).